Here is a 238-residue protein sequence, read N- to C-terminus: 7-cyano-7-deazaguanine synthase 1 (238 aa).

14–24 (FSGGQDSATCL) is an ATP binding site. Zn(2+) contacts are provided by Cys-202, Cys-217, Cys-220, and Cys-223.

Belongs to the QueC family. Zn(2+) serves as cofactor.

It catalyses the reaction 7-carboxy-7-deazaguanine + NH4(+) + ATP = 7-cyano-7-deazaguanine + ADP + phosphate + H2O + H(+). Its pathway is purine metabolism; 7-cyano-7-deazaguanine biosynthesis. Catalyzes the ATP-dependent conversion of 7-carboxy-7-deazaguanine (CDG) to 7-cyano-7-deazaguanine (preQ(0)). The chain is 7-cyano-7-deazaguanine synthase 1 from Rhodopseudomonas palustris (strain HaA2).